We begin with the raw amino-acid sequence, 573 residues long: Probable cytochrome c oxidase subunit 1 (573 aa).

A helical transmembrane segment spans residues 40 to 60 (IGIMYCVACISFFFIGGLLAL). His86 contributes to the Fe(II)-heme a binding site. The next 6 membrane-spanning stretches (helical) occupy residues 89 to 109 (IMLLFYATPIVFGFANLVLPL), 121 to 141 (LNAFSFWLFVFGATIGAAGFI), 170 to 190 (LWIMGLIVAGLGTILGAVNMI), 213 to 233 (IMVTSILILIAFPLLTAALFG), 258 to 278 (LFWFFGHPEVYIIALPFFGIV), and 290 to 310 (IFGYTTLVYATLSIAALSVAV). Cu cation contacts are provided by His264 and Tyr268. Positions 264–268 (HPEVY) form a cross-link, 1'-histidyl-3'-tyrosine (His-Tyr). His313 and His314 together coordinate Cu cation. The next 2 membrane-spanning stretches (helical) occupy residues 315-335 (MFATGAVLLPFFSFMTYLIAV) and 359-379 (MLFSVGFMVTFLLGGLTGVLL). His397 is a binding site for heme a3. The next 3 membrane-spanning stretches (helical) occupy residues 398–418 (FHYVLFGTIVFATFAGIYFWF), 433–453 (LHFWLTFIGFHTTFLVQHWLG), and 476–496 (VSTIGAFILGASMFPFVWNVF). His399 provides a ligand contact to Fe(II)-heme a.

It belongs to the heme-copper respiratory oxidase family.

Its subcellular location is the cell membrane. The enzyme catalyses 4 Fe(II)-[cytochrome c] + O2 + 8 H(+)(in) = 4 Fe(III)-[cytochrome c] + 2 H2O + 4 H(+)(out). It functions in the pathway energy metabolism; oxidative phosphorylation. Its function is as follows. Cytochrome c oxidase is the component of the respiratory chain that catalyzes the reduction of oxygen to water. Subunits 1-3 form the functional core of the enzyme complex. CO I is the catalytic subunit of the enzyme. Electrons originating in cytochrome c are transferred via the copper A center of subunit 2 and heme A of subunit 1 to the bimetallic center formed by heme A3 and copper B. The chain is Probable cytochrome c oxidase subunit 1 (ctaD) from Mycobacterium bovis (strain ATCC BAA-935 / AF2122/97).